A 365-amino-acid polypeptide reads, in one-letter code: Galactoside alpha-(1,2)-fucosyltransferase 1 (365 aa).

Residues 1-8 (MWPLSHRH) are Cytoplasmic-facing. Residues 9–25 (LCLAFLLVCVLSAISFF) form a helical; Signal-anchor for type II membrane protein membrane-spanning segment. The Lumenal segment spans residues 26–365 (LHLYQDSIRH…LSPLWTLAEP (340 aa)). Asparagine 65, asparagine 301, and asparagine 327 each carry an N-linked (GlcNAc...) asparagine glycan.

Belongs to the glycosyltransferase 11 family.

It localises to the golgi apparatus. Its subcellular location is the golgi stack membrane. It carries out the reaction a beta-D-galactosyl-(1-&gt;4)-N-acetyl-beta-D-glucosaminyl derivative + GDP-beta-L-fucose = an alpha-L-Fuc-(1-&gt;2)-beta-D-Gal-(1-&gt;4)-beta-D-GlcNAc derivative + GDP + H(+). The enzyme catalyses a ganglioside GA1 + GDP-beta-L-fucose = a ganglioside Fuc-GA1 + GDP + H(+). It catalyses the reaction a beta-D-Gal-(1-&gt;3)-beta-D-GlcNAc-(1-&gt;3)-beta-D-Gal-(1-&gt;4)-beta-D-Glc-(1&lt;-&gt;1')-Cer(d18:1(4E)) + GDP-beta-L-fucose = alpha-L-fucosyl-(1-&gt;2)- beta-D-galactosyl-(1-&gt;3)-N-acetyl-beta-D-glucosaminyl-(1-&gt;3)-beta-D-galactosyl-(1-&gt;4)-beta-D-glucosyl-(1&lt;-&gt;1')-N-acylsphing-4-enine + GDP + H(+). The catalysed reaction is a neolactoside nLc4Cer(d18:1(4E)) + GDP-beta-L-fucose = a neolactoside IV(2)-alpha-Fuc-nLc4Cer(d18:1(4E)) + GDP + H(+). It carries out the reaction a ganglioside GM1 + GDP-beta-L-fucose = a ganglioside Fuc-GM1 + GDP + H(+). The enzyme catalyses beta-D-galactosyl-(1-&gt;3)-N-acetyl-D-galactosamine + GDP-beta-L-fucose = alpha-L-fucosyl-(1-&gt;2)-beta-D-galactosyl-(1-&gt;3)-N-acetyl-D-galactosamine + GDP + H(+). It functions in the pathway protein modification; protein glycosylation. In terms of biological role, catalyzes the transfer of L-fucose, from a guanosine diphosphate-beta-L-fucose, to the terminal galactose residue of glycoconjugates through an alpha(1,2) linkage leading to H antigen synthesis that is an intermediate substrate in the synthesis of ABO blood group antigens. H antigen is essential for maturation of the glomerular layer of the main olfactory bulb, in cell migration and early cell-cell contacts during tumor associated angiogenesis. Preferentially fucosylates soluble lactose and to a lesser extent fucosylates glycolipids gangliosides GA1 and GM1a. The sequence is that of Galactoside alpha-(1,2)-fucosyltransferase 1 from Leontopithecus chrysomelas (Golden-headed lion tamarin).